The sequence spans 338 residues: F420-dependent glucose-6-phosphate dehydrogenase (338 aa).

Aspartate 40 contributes to the coenzyme F420-(gamma-Glu)n binding site. The Proton donor role is filled by histidine 41. Coenzyme F420-(gamma-Glu)n contacts are provided by residues threonine 77 and 108–109 (TG). The active-site Proton acceptor is the glutamate 110. Coenzyme F420-(gamma-Glu)n-binding positions include asparagine 113, 178–179 (GG), and 181–182 (VV). Substrate is bound by residues threonine 196, lysine 199, lysine 260, and arginine 284.

This sequence belongs to the F420-dependent glucose-6-phosphate dehydrogenase family. As to quaternary structure, homodimer.

The enzyme catalyses oxidized coenzyme F420-(gamma-L-Glu)(n) + D-glucose 6-phosphate + H(+) = 6-phospho-D-glucono-1,5-lactone + reduced coenzyme F420-(gamma-L-Glu)(n). Its function is as follows. Catalyzes the coenzyme F420-dependent oxidation of glucose 6-phosphate (G6P) to 6-phosphogluconolactone. This Gordonia bronchialis (strain ATCC 25592 / DSM 43247 / BCRC 13721 / JCM 3198 / KCTC 3076 / NBRC 16047 / NCTC 10667) (Rhodococcus bronchialis) protein is F420-dependent glucose-6-phosphate dehydrogenase.